The chain runs to 177 residues: Large ribosomal subunit protein uL6 (177 aa).

Belongs to the universal ribosomal protein uL6 family. As to quaternary structure, part of the 50S ribosomal subunit.

This protein binds to the 23S rRNA, and is important in its secondary structure. It is located near the subunit interface in the base of the L7/L12 stalk, and near the tRNA binding site of the peptidyltransferase center. The sequence is that of Large ribosomal subunit protein uL6 from Paracidovorax citrulli (strain AAC00-1) (Acidovorax citrulli).